The primary structure comprises 428 residues: MKTSLFKSLYFQVLTAIAIGILLGHFYPEIGEQMKPLGDGFVKLIKMIIAPVIFCTVVTGIAGMESMKAVGRTGAVALLYFEIVSTIALIIGLIIVNVVQPGAGMNVDPATLDAKAVEVYADQAKDQGIVAFIMDVIPASVIGAFASGNILQVLLFAVLFGFALHRLGSKGQLIFNVIESFSQVIFGIINMIMRLAPIGAFGAMAFTIGKYGVGTLVQLGQLIICFYITCILFVVLVLGSIAKATGFSIFKFIRYIREELLIVLGTSSSESALPRMLDKMEKLGCRKSVVGLVIPTGYSFNLDGTSIYLTMAAVFIAQATNSQMDIVHQITLLIVLLLSSKGAAGVTGSGFIVLAATLSAVGHLPVAGLALILGIDRFMSEARALTNLVGNGVATIVVAKWVKELDHKKLDDVLNNRAPDGKTHELSS.

Helical transmembrane passes span S8–P28, L44–M64, V76–V96, I142–F162, V184–M204, L222–A242, I326–V346, and I352–I372.

This sequence belongs to the dicarboxylate/amino acid:cation symporter (DAACS) (TC 2.A.23) family.

The protein localises to the cell inner membrane. In terms of biological role, responsible for the transport of dicarboxylates such as succinate, fumarate, and malate from the periplasm across the membrane. This Shigella dysenteriae serotype 1 (strain Sd197) protein is C4-dicarboxylate transport protein.